Here is a 278-residue protein sequence, read N- to C-terminus: Bis(5'-nucleosyl)-tetraphosphatase, symmetrical (278 aa).

Belongs to the Ap4A hydrolase family.

The catalysed reaction is P(1),P(4)-bis(5'-adenosyl) tetraphosphate + H2O = 2 ADP + 2 H(+). Hydrolyzes diadenosine 5',5'''-P1,P4-tetraphosphate to yield ADP. This Nitrosococcus oceani (strain ATCC 19707 / BCRC 17464 / JCM 30415 / NCIMB 11848 / C-107) protein is Bis(5'-nucleosyl)-tetraphosphatase, symmetrical.